Here is a 552-residue protein sequence, read N- to C-terminus: CTP synthase (552 aa).

The amidoligase domain stretch occupies residues 1 to 267; sequence MAKFIFVTGG…AEQTLKLLRM (267 aa). Residue Ser-13 participates in CTP binding. Ser-13 contributes to the UTP binding site. Residues 14 to 19 and Asp-71 each bind ATP; that span reads SIGKGI. Mg(2+) is bound by residues Asp-71 and Glu-141. CTP is bound by residues 148 to 150, 188 to 193, and Lys-224; these read DIE and KTKPTQ. Residues 188–193 and Lys-224 each bind UTP; that span reads KTKPTQ. The Glutamine amidotransferase type-1 domain occupies 292 to 534; sequence DIAIVGKYVQ…IQAAGNHKSQ (243 aa). Gly-354 lines the L-glutamine pocket. The active-site Nucleophile; for glutamine hydrolysis is Cys-381. L-glutamine contacts are provided by residues 382–385, Glu-405, and Arg-462; that span reads LGMQ. Active-site residues include His-507 and Glu-509. Residues 533-552 are disordered; that stretch reads SQPISDELDNQSTEMSISLS.

This sequence belongs to the CTP synthase family. Homotetramer.

The enzyme catalyses UTP + L-glutamine + ATP + H2O = CTP + L-glutamate + ADP + phosphate + 2 H(+). It catalyses the reaction L-glutamine + H2O = L-glutamate + NH4(+). It carries out the reaction UTP + NH4(+) + ATP = CTP + ADP + phosphate + 2 H(+). The protein operates within pyrimidine metabolism; CTP biosynthesis via de novo pathway; CTP from UDP: step 2/2. Allosterically activated by GTP, when glutamine is the substrate; GTP has no effect on the reaction when ammonia is the substrate. The allosteric effector GTP functions by stabilizing the protein conformation that binds the tetrahedral intermediate(s) formed during glutamine hydrolysis. Inhibited by the product CTP, via allosteric rather than competitive inhibition. Functionally, catalyzes the ATP-dependent amination of UTP to CTP with either L-glutamine or ammonia as the source of nitrogen. Regulates intracellular CTP levels through interactions with the four ribonucleotide triphosphates. This chain is CTP synthase, found in Picosynechococcus sp. (strain ATCC 27264 / PCC 7002 / PR-6) (Agmenellum quadruplicatum).